The primary structure comprises 409 residues: Serine/threonine transporter SstT (409 aa).

9 consecutive transmembrane segments (helical) span residues leucine 24 to phenylalanine 44, phenylalanine 48 to isoleucine 68, isoleucine 82 to methionine 102, alanine 142 to leucine 162, leucine 194 to glycine 214, leucine 218 to valine 238, isoleucine 292 to methionine 312, glycine 319 to cysteine 339, and valine 365 to threonine 385.

It belongs to the dicarboxylate/amino acid:cation symporter (DAACS) (TC 2.A.23) family.

The protein resides in the cell inner membrane. The enzyme catalyses L-serine(in) + Na(+)(in) = L-serine(out) + Na(+)(out). It carries out the reaction L-threonine(in) + Na(+)(in) = L-threonine(out) + Na(+)(out). Involved in the import of serine and threonine into the cell, with the concomitant import of sodium (symport system). The sequence is that of Serine/threonine transporter SstT from Neisseria meningitidis serogroup C / serotype 2a (strain ATCC 700532 / DSM 15464 / FAM18).